The sequence spans 82 residues: Protein transport protein SBH1 (82 aa).

Positions 1 to 36 are disordered; it reads MSSPTPPGGQRTLQKRKQGSSQKVAASAPKKNTNSN. The Cytoplasmic portion of the chain corresponds to 1 to 53; that stretch reads MSSPTPPGGQRTLQKRKQGSSQKVAASAPKKNTNSNNSILKIYSDEATGLRVD. The segment covering 19–36 has biased composition (polar residues); it reads GSSQKVAASAPKKNTNSN. A helical transmembrane segment spans residues 54 to 74; the sequence is PLVVLFLAVGFIFSVVALHVI.

It belongs to the SEC61-beta family. Component of the heterotrimeric Sec61 complex, which is composed of SSH1, SBH1 and SSS1. Presumably three to four Sec61 heterotrimers assemble into an oligomeric ring with a central aqueous pore. In cotranslational ER import, the pore diameter varies from 9-15 A in a ribosome-free resting state to 40-60 A in a functional state when associated with the ribosome. The Sec61 complex is part of a channel-forming translocon complex whose composition seem to change dependent upon different functional states. During post-translational ER import the Sec61 complex associates with the Sec62/63 complex to form the Sec complex. SBH1 interacts OST2, OST4 and WBP1 components of the OT complex.

It is found in the endoplasmic reticulum membrane. Part of the Sec61 complex, which is the major component of a channel-forming translocon complex that mediates protein translocation across the endoplasmic reticulum (ER). The functional states of the translocon complex include co- and post-translational ER import, cotranslational membrane protein integration and retrograde transport of misfolded proteins out of the ER. In the cotranslational pathway, ribosomes synthesizing presecretory proteins are targeted to the translocon by the cytosolic signal recognition particle (SRP) and its ER-localized receptor. The association of the Sec61 complex with the ribosome is mediated by the 28S rRNA of the large ribosomal subunit. SRP-independent post-translational translocation requires the association of additional factors, such as the Sec62/63 complex and KAR2. In Saccharomyces cerevisiae (strain ATCC 204508 / S288c) (Baker's yeast), this protein is Protein transport protein SBH1 (SBH1).